The following is a 296-amino-acid chain: MFS-type transporter pytF (296 aa).

The next 7 helical transmembrane spans lie at 30 to 50 (WLVVLGGFLAYFVTFGMLNSF), 72 to 92 (WIGSLQLFLLFIGGLFFGPVF), 98 to 118 (KVLFIPGTLLLSLSQMMVSLC), 124 to 144 (FILAQSLLFGIAVAMLFYPTI), 157 to 177 (LAMGIVLTGSSLGGIAWPLIL), 180 to 200 (LFAVVGFPWGLRIVGFISFAL), and 238 to 258 (VVGMLFVIWGMFIPFYYIPLF). Asn-265 is a glycosylation site (N-linked (GlcNAc...) asparagine). Residues 271-291 (SLISILNAGSFVGRIVSGALA) form a helical membrane-spanning segment.

The protein belongs to the major facilitator superfamily. Monocarboxylate porter (TC 2.A.1.13) family.

It localises to the cell membrane. MFS-type transporter; part of the gene cluster that mediates the biosynthesis of pyranterreones, a family of antioxidative compounds. Directly involved in the secretion of pyranterreones. This Aspergillus terreus (strain NIH 2624 / FGSC A1156) protein is MFS-type transporter pytF.